Here is a 231-residue protein sequence, read N- to C-terminus: High-affinity zinc uptake system ATP-binding protein ZnuC (231 aa).

The ABC transporter domain occupies 4-230; sequence VSLKDIVFGY…CLTWNSCDEL (227 aa).

It belongs to the ABC transporter superfamily. The complex is composed of two ATP-binding proteins (ZnuC), two transmembrane proteins (ZnuB) and a solute-binding protein (ZnuA).

The protein resides in the cell membrane. The enzyme catalyses Zn(2+)(out) + ATP(in) + H2O(in) = Zn(2+)(in) + ADP(in) + phosphate(in) + H(+)(in). Its function is as follows. Part of the high-affinity ABC transporter complex ZnuABC involved in zinc import. Responsible for energy coupling to the transport system. ZnuABC-mediated zinc transport is required for comF expression and competence development. This chain is High-affinity zinc uptake system ATP-binding protein ZnuC (znuC), found in Bacillus subtilis (strain 168).